The primary structure comprises 308 residues: Maspardin (308 aa).

The AB hydrolase-1 domain maps to 87–159; sequence FCDGFRKLLD…NSFWLMPAFM (73 aa). At Ser-304 the chain carries Phosphoserine.

The protein belongs to the AB hydrolase superfamily. As to quaternary structure, interacts with CD4. Interacts with ALDH16A1. In terms of tissue distribution, expressed in all tissues tested, including heart, brain, placenta, lung, liver, skeletal muscle, kidney and pancreas. Expressed in J.CaM1.6, HuT 78 and HeLa cell lines (at protein level).

It is found in the cytoplasm. The protein localises to the cytosol. The protein resides in the membrane. It localises to the endosome membrane. Its subcellular location is the golgi apparatus. It is found in the trans-Golgi network membrane. Its function is as follows. May play a role as a negative regulatory factor in CD4-dependent T-cell activation. This chain is Maspardin (SPG21), found in Homo sapiens (Human).